We begin with the raw amino-acid sequence, 147 residues long: Small ribosomal subunit protein uS9 (147 aa).

This sequence belongs to the universal ribosomal protein uS9 family.

This is Small ribosomal subunit protein uS9 (rps16) from Dictyostelium discoideum (Social amoeba).